Here is a 179-residue protein sequence, read N- to C-terminus: Large ribosomal subunit protein uL5 (179 aa).

Belongs to the universal ribosomal protein uL5 family. As to quaternary structure, part of the 50S ribosomal subunit; part of the 5S rRNA/L5/L18/L25 subcomplex. Contacts the 5S rRNA and the P site tRNA. Forms a bridge to the 30S subunit in the 70S ribosome.

Its function is as follows. This is one of the proteins that bind and probably mediate the attachment of the 5S RNA into the large ribosomal subunit, where it forms part of the central protuberance. In the 70S ribosome it contacts protein S13 of the 30S subunit (bridge B1b), connecting the 2 subunits; this bridge is implicated in subunit movement. Contacts the P site tRNA; the 5S rRNA and some of its associated proteins might help stabilize positioning of ribosome-bound tRNAs. The protein is Large ribosomal subunit protein uL5 of Dehalococcoides mccartyi (strain ATCC BAA-2266 / KCTC 15142 / 195) (Dehalococcoides ethenogenes (strain 195)).